Reading from the N-terminus, the 71-residue chain is Translation initiation factor IF-1 (71 aa).

In terms of domain architecture, S1-like spans 1-71 (MAKQSAIEQD…LSKARITYRY (71 aa)).

This sequence belongs to the IF-1 family. Component of the 30S ribosomal translation pre-initiation complex which assembles on the 30S ribosome in the order IF-2 and IF-3, IF-1 and N-formylmethionyl-tRNA(fMet); mRNA recruitment can occur at any time during PIC assembly.

It is found in the cytoplasm. One of the essential components for the initiation of protein synthesis. Stabilizes the binding of IF-2 and IF-3 on the 30S subunit to which N-formylmethionyl-tRNA(fMet) subsequently binds. Helps modulate mRNA selection, yielding the 30S pre-initiation complex (PIC). Upon addition of the 50S ribosomal subunit IF-1, IF-2 and IF-3 are released leaving the mature 70S translation initiation complex. The polypeptide is Translation initiation factor IF-1 (Flavobacterium johnsoniae (strain ATCC 17061 / DSM 2064 / JCM 8514 / BCRC 14874 / CCUG 350202 / NBRC 14942 / NCIMB 11054 / UW101) (Cytophaga johnsonae)).